Consider the following 515-residue polypeptide: MSQITLIILVLAIGFSCTKSHPINSTRDGEDSGTDLKNLLTEPANTTYATNSTLTRKELNSTIQPERNDEGSAIRKIMASKKDENITGQSEINTSAKSQPINSTRDGEDSGTDLKNLLTEPANTTYATNSTLTRKELNSSIPPERNDEGSAIRKIMASKKDEIITGQSEINTIAKSQPINSTRDGEDSGTDLKNLLTEPANTTYATNSTLTRKELNSSIPPERNDEGSAIRKIMASKKDEIITGQSEINTIAKSQPINSTRDGEDSGTDLKNLLTELANTTYLTNSTLTRKELNSTIQPERNDEGSAIRKIMASKKDENITGQSEINTSAKSQPINSTRDGEDSGTDLKNLLTDPANTTYATNSTLTRKELNSTIQPERNDETSAIRKIMASRKDENVTGQSEFNISTNSNLNTTTHHEDAVVSPTEKVYVPNNASSAELNVSSTIQPKEADVTTSSANDIKKPAFPYCIILITFQIVTVGMIIYLVFRTMRKPCQSERAIPLNSFGFGNNSSYE.

Positions 1-20 (MSQITLIILVLAIGFSCTKS) are cleaved as a signal peptide. Residues 21 to 467 (HPINSTRDGE…ANDIKKPAFP (447 aa)) lie on the Extracellular side of the membrane. Asn-24, Asn-45, Asn-51, Asn-60, Asn-85, Asn-93, Asn-102, Asn-123, Asn-129, Asn-138, Asn-180, Asn-201, Asn-207, Asn-216, Asn-258, Asn-279, Asn-285, Asn-294, Asn-319, Asn-327, Asn-336, Asn-357, Asn-363, Asn-372, Asn-397, Asn-405, Asn-413, Asn-434, and Asn-441 each carry an N-linked (GlcNAc...) asparagine; by host glycan. Positions 80 to 114 (SKKDENITGQSEINTSAKSQPINSTRDGEDSGTDL) are disordered. The span at 86-104 (ITGQSEINTSAKSQPINST) shows a compositional bias: polar residues. The segment at 314–358 (SKKDENITGQSEINTSAKSQPINSTRDGEDSGTDLKNLLTDPANT) is disordered. Over residues 320–338 (ITGQSEINTSAKSQPINST) the composition is skewed to polar residues. Positions 393 to 413 (RKDENVTGQSEFNISTNSNLN) are disordered. A helical membrane pass occupies residues 468 to 488 (YCIILITFQIVTVGMIIYLVF). Topologically, residues 489–515 (RTMRKPCQSERAIPLNSFGFGNNSSYE) are cytoplasmic.

This sequence belongs to the polydnaviridae Glc1.8 protein family.

Its subcellular location is the host membrane. In terms of biological role, involved in suppression of the insect cellular immune response. Inhibits host hemocyte adhesion and phagocytosis. The polypeptide is Mucin-like protein Glc1.8b (O16) (Microplitis demolitor (Parasitoid wasp)).